The following is a 272-amino-acid chain: NAD kinase (272 aa).

Asp50 (proton acceptor) is an active-site residue. Residues 50-51 (DG), 126-127 (NE), Arg152, Asp154, 165-170 (TAYNKS), and Ala189 each bind NAD(+).

This sequence belongs to the NAD kinase family. Requires a divalent metal cation as cofactor.

The protein resides in the cytoplasm. The enzyme catalyses NAD(+) + ATP = ADP + NADP(+) + H(+). Functionally, involved in the regulation of the intracellular balance of NAD and NADP, and is a key enzyme in the biosynthesis of NADP. Catalyzes specifically the phosphorylation on 2'-hydroxyl of the adenosine moiety of NAD to yield NADP. This is NAD kinase from Streptococcus pneumoniae serotype 19F (strain G54).